A 188-amino-acid polypeptide reads, in one-letter code: UPF0200 protein M1627_1244 (188 aa).

15 to 22 lines the ATP pocket; the sequence is GMPGSGKS.

It belongs to the UPF0200 family.

The sequence is that of UPF0200 protein M1627_1244 from Saccharolobus islandicus (strain M.16.27) (Sulfolobus islandicus).